The chain runs to 372 residues: tRNA-specific 2-thiouridylase MnmA (372 aa).

ATP contacts are provided by residues 7–14 (GLSGGVDS) and Met-33. The segment at 104-106 (NPD) is interaction with target base in tRNA. Catalysis depends on Cys-109, which acts as the Nucleophile. A disulfide bond links Cys-109 and Cys-202. Residue Gly-134 participates in ATP binding. An interaction with tRNA region spans residues 152–154 (KDQ). Residue Cys-202 is the Cysteine persulfide intermediate of the active site. The interval 310–311 (RY) is interaction with tRNA.

Belongs to the MnmA/TRMU family.

The protein resides in the cytoplasm. It catalyses the reaction S-sulfanyl-L-cysteinyl-[protein] + uridine(34) in tRNA + AH2 + ATP = 2-thiouridine(34) in tRNA + L-cysteinyl-[protein] + A + AMP + diphosphate + H(+). In terms of biological role, catalyzes the 2-thiolation of uridine at the wobble position (U34) of tRNA, leading to the formation of s(2)U34. The sequence is that of tRNA-specific 2-thiouridylase MnmA from Mesomycoplasma hyopneumoniae (strain 232) (Mycoplasma hyopneumoniae).